Consider the following 59-residue polypeptide: Single-pass membrane and coiled-coil domain-containing protein 4 (59 aa).

A disordered region spans residues methionine 1–methionine 23. Residues lysine 9–alanine 22 are compositionally biased toward basic and acidic residues. A coiled-coil region spans residues lysine 9 to threonine 31. The chain crosses the membrane as a helical span at residues threonine 32–alanine 52.

This sequence belongs to the SMCO4 family.

Its subcellular location is the membrane. This is Single-pass membrane and coiled-coil domain-containing protein 4 (Smco4) from Mus musculus (Mouse).